The primary structure comprises 587 residues: Aspartate--tRNA ligase (587 aa).

An L-aspartate-binding site is contributed by E175. The tract at residues Q199 to K202 is aspartate. 2 residues coordinate L-aspartate: R221 and H446. An ATP-binding site is contributed by R221–E223. E480 is an ATP binding site. An L-aspartate-binding site is contributed by R487. G532–R535 contributes to the ATP binding site.

Belongs to the class-II aminoacyl-tRNA synthetase family. Type 1 subfamily. Homodimer.

It localises to the cytoplasm. The enzyme catalyses tRNA(Asp) + L-aspartate + ATP = L-aspartyl-tRNA(Asp) + AMP + diphosphate. Functionally, catalyzes the attachment of L-aspartate to tRNA(Asp) in a two-step reaction: L-aspartate is first activated by ATP to form Asp-AMP and then transferred to the acceptor end of tRNA(Asp). This chain is Aspartate--tRNA ligase, found in Streptomyces avermitilis (strain ATCC 31267 / DSM 46492 / JCM 5070 / NBRC 14893 / NCIMB 12804 / NRRL 8165 / MA-4680).